Consider the following 601-residue polypeptide: Elongation factor 4 (601 aa).

Residues 5-187 (DKIRNFSIIA…SIVKDLPAPQ (183 aa)) enclose the tr-type G domain. GTP is bound by residues 17–22 (DHGKST) and 134–137 (NKVD).

This sequence belongs to the TRAFAC class translation factor GTPase superfamily. Classic translation factor GTPase family. LepA subfamily.

The protein resides in the cell inner membrane. It carries out the reaction GTP + H2O = GDP + phosphate + H(+). Functionally, required for accurate and efficient protein synthesis under certain stress conditions. May act as a fidelity factor of the translation reaction, by catalyzing a one-codon backward translocation of tRNAs on improperly translocated ribosomes. Back-translocation proceeds from a post-translocation (POST) complex to a pre-translocation (PRE) complex, thus giving elongation factor G a second chance to translocate the tRNAs correctly. Binds to ribosomes in a GTP-dependent manner. The chain is Elongation factor 4 from Maridesulfovibrio salexigens (strain ATCC 14822 / DSM 2638 / NCIMB 8403 / VKM B-1763) (Desulfovibrio salexigens).